The chain runs to 621 residues: 1-deoxy-D-xylulose-5-phosphate synthase (621 aa).

Thiamine diphosphate contacts are provided by residues His76 and 117–119; that span reads AHS. Asp148 contacts Mg(2+). Residues 149 to 150, Asn178, Tyr285, and Glu367 contribute to the thiamine diphosphate site; that span reads GA. Residue Asn178 coordinates Mg(2+).

Belongs to the transketolase family. DXPS subfamily. As to quaternary structure, homodimer. Mg(2+) serves as cofactor. It depends on thiamine diphosphate as a cofactor.

It catalyses the reaction D-glyceraldehyde 3-phosphate + pyruvate + H(+) = 1-deoxy-D-xylulose 5-phosphate + CO2. Its pathway is metabolic intermediate biosynthesis; 1-deoxy-D-xylulose 5-phosphate biosynthesis; 1-deoxy-D-xylulose 5-phosphate from D-glyceraldehyde 3-phosphate and pyruvate: step 1/1. Functionally, catalyzes the acyloin condensation reaction between C atoms 2 and 3 of pyruvate and glyceraldehyde 3-phosphate to yield 1-deoxy-D-xylulose-5-phosphate (DXP). The chain is 1-deoxy-D-xylulose-5-phosphate synthase from Aromatoleum aromaticum (strain DSM 19018 / LMG 30748 / EbN1) (Azoarcus sp. (strain EbN1)).